The sequence spans 230 residues: Uracil-DNA glycosylase (230 aa).

Catalysis depends on D65, which acts as the Proton acceptor.

This sequence belongs to the uracil-DNA glycosylase (UDG) superfamily. UNG family.

Its subcellular location is the cytoplasm. It catalyses the reaction Hydrolyzes single-stranded DNA or mismatched double-stranded DNA and polynucleotides, releasing free uracil.. In terms of biological role, excises uracil residues from the DNA which can arise as a result of misincorporation of dUMP residues by DNA polymerase or due to deamination of cytosine. This is Uracil-DNA glycosylase from Pediococcus pentosaceus (strain ATCC 25745 / CCUG 21536 / LMG 10740 / 183-1w).